The primary structure comprises 332 residues: Ketol-acid reductoisomerase (NADP(+)) (332 aa).

Residues 2-182 enclose the KARI N-terminal Rossmann domain; the sequence is AKVYHDTEVS…GATRAGVLET (181 aa). Residues 25–28, Arg-48, Ser-53, and 83–86 contribute to the NADP(+) site; these read YGSQ and DTEQ. His-108 is an active-site residue. Gly-134 provides a ligand contact to NADP(+). Positions 183-328 constitute a KARI C-terminal knotted domain; sequence TFKEETETDL…KVLREMMPWL (146 aa). Mg(2+) is bound by residues Asp-191, Glu-195, Glu-227, and Glu-231. Residue Ser-252 coordinates substrate.

The protein belongs to the ketol-acid reductoisomerase family. It depends on Mg(2+) as a cofactor.

The enzyme catalyses (2R)-2,3-dihydroxy-3-methylbutanoate + NADP(+) = (2S)-2-acetolactate + NADPH + H(+). It catalyses the reaction (2R,3R)-2,3-dihydroxy-3-methylpentanoate + NADP(+) = (S)-2-ethyl-2-hydroxy-3-oxobutanoate + NADPH + H(+). Its pathway is amino-acid biosynthesis; L-isoleucine biosynthesis; L-isoleucine from 2-oxobutanoate: step 2/4. The protein operates within amino-acid biosynthesis; L-valine biosynthesis; L-valine from pyruvate: step 2/4. In terms of biological role, involved in the biosynthesis of branched-chain amino acids (BCAA). Catalyzes an alkyl-migration followed by a ketol-acid reduction of (S)-2-acetolactate (S2AL) to yield (R)-2,3-dihydroxy-isovalerate. In the isomerase reaction, S2AL is rearranged via a Mg-dependent methyl migration to produce 3-hydroxy-3-methyl-2-ketobutyrate (HMKB). In the reductase reaction, this 2-ketoacid undergoes a metal-dependent reduction by NADPH to yield (R)-2,3-dihydroxy-isovalerate. The chain is Ketol-acid reductoisomerase (NADP(+)) from Dictyoglomus turgidum (strain DSM 6724 / Z-1310).